A 240-amino-acid polypeptide reads, in one-letter code: Short palate, lung and nasal epithelium carcinoma-associated protein 2B (240 aa).

Positions 1-19 (MVQLWKLVLLCGLLAGTSA) are cleaved as a signal peptide. The cysteines at positions 163 and 206 are disulfide-linked.

It belongs to the BPI/LBP/Plunc superfamily. Plunc family. In terms of tissue distribution, parotid glands.

It is found in the secreted. The sequence is that of Short palate, lung and nasal epithelium carcinoma-associated protein 2B (SPLUNC2B) from Bos taurus (Bovine).